We begin with the raw amino-acid sequence, 276 residues long: Large ribosomal subunit protein uL2 (276 aa).

A disordered region spans residues 224-276 (AMNPVDHPLGGGEGKSSGGRHPVTPWGKPTKGYKTRNKKKPSSKLIVKRRGQK). Residues 254–276 (KGYKTRNKKKPSSKLIVKRRGQK) are compositionally biased toward basic residues.

It belongs to the universal ribosomal protein uL2 family. As to quaternary structure, part of the 50S ribosomal subunit. Forms a bridge to the 30S subunit in the 70S ribosome.

Its function is as follows. One of the primary rRNA binding proteins. Required for association of the 30S and 50S subunits to form the 70S ribosome, for tRNA binding and peptide bond formation. It has been suggested to have peptidyltransferase activity; this is somewhat controversial. Makes several contacts with the 16S rRNA in the 70S ribosome. This chain is Large ribosomal subunit protein uL2, found in Solidesulfovibrio magneticus (strain ATCC 700980 / DSM 13731 / RS-1) (Desulfovibrio magneticus).